Reading from the N-terminus, the 239-residue chain is Probable GTP-binding protein EngB (239 aa).

Positions 23 to 219 constitute an EngB-type G domain; sequence QVPEIAFAGR…NDKILELLGL (197 aa). GTP contacts are provided by residues 31 to 38, 58 to 62, 92 to 95, 159 to 162, and 193 to 200; these read GRSNAGKS, GRTQH, DLPG, TKSD, and FTAQLFSA. Mg(2+) is bound by residues Ser38 and Thr60.

This sequence belongs to the TRAFAC class TrmE-Era-EngA-EngB-Septin-like GTPase superfamily. EngB GTPase family. Requires Mg(2+) as cofactor.

Functionally, necessary for normal cell division and for the maintenance of normal septation. This chain is Probable GTP-binding protein EngB, found in Herminiimonas arsenicoxydans.